A 736-amino-acid polypeptide reads, in one-letter code: Phosphoribosylformylglycinamidine synthase subunit PurL (736 aa).

Residue histidine 49 is part of the active site. 2 residues coordinate ATP: tyrosine 52 and lysine 91. Residue glutamate 93 participates in Mg(2+) binding. Substrate is bound by residues 94-97 (SHNH) and arginine 116. The Proton acceptor role is filled by histidine 95. Aspartate 117 serves as a coordination point for Mg(2+). Residue glutamine 240 participates in substrate binding. Aspartate 268 is a Mg(2+) binding site. 312 to 314 (ESQ) provides a ligand contact to substrate. 2 residues coordinate ATP: aspartate 493 and glycine 530. Asparagine 531 is a binding site for Mg(2+). Residue serine 533 participates in substrate binding.

The protein belongs to the FGAMS family. As to quaternary structure, monomer. Part of the FGAM synthase complex composed of 1 PurL, 1 PurQ and 2 PurS subunits.

It is found in the cytoplasm. It carries out the reaction N(2)-formyl-N(1)-(5-phospho-beta-D-ribosyl)glycinamide + L-glutamine + ATP + H2O = 2-formamido-N(1)-(5-O-phospho-beta-D-ribosyl)acetamidine + L-glutamate + ADP + phosphate + H(+). It participates in purine metabolism; IMP biosynthesis via de novo pathway; 5-amino-1-(5-phospho-D-ribosyl)imidazole from N(2)-formyl-N(1)-(5-phospho-D-ribosyl)glycinamide: step 1/2. Functionally, part of the phosphoribosylformylglycinamidine synthase complex involved in the purines biosynthetic pathway. Catalyzes the ATP-dependent conversion of formylglycinamide ribonucleotide (FGAR) and glutamine to yield formylglycinamidine ribonucleotide (FGAM) and glutamate. The FGAM synthase complex is composed of three subunits. PurQ produces an ammonia molecule by converting glutamine to glutamate. PurL transfers the ammonia molecule to FGAR to form FGAM in an ATP-dependent manner. PurS interacts with PurQ and PurL and is thought to assist in the transfer of the ammonia molecule from PurQ to PurL. This chain is Phosphoribosylformylglycinamidine synthase subunit PurL, found in Rhodopseudomonas palustris (strain HaA2).